A 447-amino-acid polypeptide reads, in one-letter code: Tubulin beta-5 chain (447 aa).

GTP-binding residues include Q11, E69, S138, G142, T143, G144, N204, and N226. Mg(2+) is bound at residue E69. Residues 424–447 (QYQDATAEEEGEFDEDEELDDAMG) are disordered. A compositionally biased stretch (acidic residues) spans 429 to 447 (TAEEEGEFDEDEELDDAMG).

It belongs to the tubulin family. As to quaternary structure, dimer of alpha and beta chains. A typical microtubule is a hollow water-filled tube with an outer diameter of 25 nm and an inner diameter of 15 nM. Alpha-beta heterodimers associate head-to-tail to form protofilaments running lengthwise along the microtubule wall with the beta-tubulin subunit facing the microtubule plus end conferring a structural polarity. Microtubules usually have 13 protofilaments but different protofilament numbers can be found in some organisms and specialized cells. Mg(2+) is required as a cofactor.

The protein localises to the cytoplasm. It is found in the cytoskeleton. Tubulin is the major constituent of microtubules, a cylinder consisting of laterally associated linear protofilaments composed of alpha- and beta-tubulin heterodimers. Microtubules grow by the addition of GTP-tubulin dimers to the microtubule end, where a stabilizing cap forms. Below the cap, tubulin dimers are in GDP-bound state, owing to GTPase activity of alpha-tubulin. This is Tubulin beta-5 chain (TUBB5) from Ectocarpus variabilis (Brown alga).